We begin with the raw amino-acid sequence, 582 residues long: uncharacterized protein (582 aa).

Residues 1 to 27 form the signal peptide; the sequence is MNYAVLPPELNSLRMFTGAGSAPMLAA. The segment covering 241 to 257 has biased composition (gly residues); sequence GNGRAGLPGSGNVGNGN. The tract at residues 241–278 is disordered; the sequence is GNGRAGLPGSGNVGNGNLGNSNLGSGNTGNSNVGFGNT. Residues 258-278 show a composition bias toward low complexity; the sequence is LGNSNLGSGNTGNSNVGFGNT.

The protein belongs to the mycobacterial PPE family.

This is an uncharacterized protein from Mycobacterium tuberculosis (strain ATCC 25618 / H37Rv).